Here is a 556-residue protein sequence, read N- to C-terminus: Cholesterol oxidase (556 aa).

Residues G18, E37, G88, A93, and V235 each coordinate FAD. H471 (proton acceptor) is an active-site residue. G504 serves as a coordination point for FAD.

This sequence belongs to the GMC oxidoreductase family. FAD is required as a cofactor.

The enzyme catalyses cholesterol + O2 = cholest-5-en-3-one + H2O2. It carries out the reaction cholest-5-en-3-one = cholest-4-en-3-one. It participates in steroid metabolism; cholesterol degradation. Bifunctional enzyme that catalyzes the oxidation and isomerization of cholesterol to cholestenone (cholest-4-en-3-one), an initial step in the cholesterol degradation process. In Acinetobacter baumannii, this protein is Cholesterol oxidase.